Here is a 178-residue protein sequence, read N- to C-terminus: Transcription factor E (178 aa).

The region spanning 4-88 is the HTH TFE/IIEalpha-type domain; that stretch reads AEDLFINLAK…YWKPNIDQIN (85 aa).

Belongs to the TFE family. Monomer. Interaction with RNA polymerase subunits RpoF and RpoE is necessary for Tfe stimulatory transcription activity. Able to interact with Tbp and RNA polymerase in the absence of DNA promoter. Interacts both with the preinitiation and elongation complexes.

In terms of biological role, transcription factor that plays a role in the activation of archaeal genes transcribed by RNA polymerase. Facilitates transcription initiation by enhancing TATA-box recognition by TATA-box-binding protein (Tbp), and transcription factor B (Tfb) and RNA polymerase recruitment. Not absolutely required for transcription in vitro, but particularly important in cases where Tbp or Tfb function is not optimal. It dynamically alters the nucleic acid-binding properties of RNA polymerases by stabilizing the initiation complex and destabilizing elongation complexes. Seems to translocate with the RNA polymerase following initiation and acts by binding to the non template strand of the transcription bubble in elongation complexes. This chain is Transcription factor E, found in Saccharolobus islandicus (strain L.S.2.15 / Lassen #1) (Sulfolobus islandicus).